The following is a 459-amino-acid chain: Autophagy-related protein 18 (459 aa).

WD repeat units follow at residues 1–39 (MTSP…RIFS) and 188–228 (AHRS…KLYQ). Residues 229–232 (FRRG) are necessary for proper localization to vacuole membrane. The L/FRRG motif signature appears at 229–233 (FRRGT). A WD 3 repeat occupies 233–272 (TYPSTIYSMSFNLSSTLLCVSSTSDTIHIFRLGAPPGNTT). Residues 264–339 (LGAPPGNTTP…RGSGSFSSML (76 aa)) are disordered. A compositionally biased stretch (low complexity) spans 265-277 (GAPPGNTTPAGAP). Residues 285–296 (RQDRWSRARSYD) are compositionally biased toward basic and acidic residues. Over residues 319-330 (PGAGNNQGGHTR) the composition is skewed to gly residues. A WD 4 repeat occupies 393–433 (APGGPLRSVVAMSSSSPQVMVVTSDGGFYVYNIDMEHGGEG).

This sequence belongs to the WD repeat PROPPIN family. Component of the PI(3,5)P2 regulatory complex. Interacts with ATG2 and ATG9. The ATG2-ATG18 complex is essential for autophagosome formation.

It localises to the preautophagosomal structure membrane. The protein resides in the vacuole membrane. Its subcellular location is the endosome membrane. Component of the PI(3,5)P2 regulatory complex that regulates both the synthesis and turnover of phosphatidylinositol 3,5-bisphosphate (PtdIns(3,5)P2). Plays an important role in osmotically-induced vacuole fragmentation. Required for cytoplasm to vacuole transport (Cvt) vesicle formation, pexophagy and starvation-induced autophagy. Involved in correct ATG9 trafficking to the pre-autophagosomal structure. With ATG2, protects ATG8 from ATG4-mediated cleavage. Autophagy is required for proper vegetative growth, asexual/sexual reproduction, and full virulence. Autophagy is particularly involved in the biosynthesis of deoxynivalenol (DON), an important virulence determinant. This Gibberella zeae (strain ATCC MYA-4620 / CBS 123657 / FGSC 9075 / NRRL 31084 / PH-1) (Wheat head blight fungus) protein is Autophagy-related protein 18.